A 238-amino-acid chain; its full sequence is Pre-protein VI (238 aa).

The propeptide occupies 1 to 33 (MDAVNFSILAPRYGSHPMMSAWSGIGTSDMNGG). Residues 34–54 (AFNWGGIWSGIKNFGSNVKNW) are amphipathic alpha-helix essential for membrane lytic activity. The involved in endosomal membrane lysis stretch occupies residues 36-53 (NWGGIWSGIKNFGSNVKN). An interaction with hexon protein region spans residues 48-74 (GSNVKNWGSRAWNSQTGKLLRQKLNDT). The short motif at 67–76 (LRQKLNDTKV) is the Nuclear export signal element. Residues 153 to 156 (PPSY) carry the PPXY motif motif. The tract at residues 187 to 212 (TLELKPSDQPPPYSPQSSNMPVTAPV) is disordered. A Nuclear export signal motif is present at residues 219–230 (GTLANIVGVGLS). Positions 221–227 (LANIVGV) are interaction with hexon protein. The segment at 228 to 238 (GLSNVKRRRCF) is binds to importin alpha/beta, involved in hexon nuclear import. Positions 233–236 (KRRR) match the Nuclear localization signal motif.

The protein belongs to the adenoviridae protein VI family. Interacts with hexon protein; this interaction allows nuclear import of hexon trimers and possibly pre-capsid assembly. Interacts (via C-terminal NLS) with importin alpha/beta. In terms of assembly, interacts (via PPxY motif) with host NEDD4 ubiquitine ligase; this interaction might play a role in virus intracellular transport during entry. Part of a complex composed of the core-capsid bridging protein, the endosome lysis protein VI and the hexon-linking protein VIII; these interactions bridge the virus core to the capsid. Interacts with peripentonal hexons; this interaction stabilizes the capsid by gluing two peripentonal hexons together and joining them with an adjacent group-of-nine hexon. As to quaternary structure, heterodimer with the viral protease; disulfide-linked. Interacts with the viral protease. Ubiquitinated by Nedd4 following partial capsid disassembly; which might play a role in intracellular virus movement during entry. Post-translationally, contains the major nuclear import and export signals. Proteolytically removed during virion maturation. The processing of the C-terminus turns the precursor into a mature viral structural protein and abrogates its ability to promote hexon import and act as a potential chaperone protein.

The protein resides in the host nucleus. Its subcellular location is the host cytoplasm. The protein localises to the virion. In terms of biological role, during virus assembly, promotes hexon trimers nuclear import through nuclear pore complexes via an importin alpha/beta-dependent mechanism. By analogy to herpesviruses capsid assembly, might act as a chaperone to promote the formation of the icosahedral capsid. Structural component of the virion that provides increased stability to the particle shell through its interaction with the core-capsid bridging protein and the hexon-linking protein VIII. Fibers shedding during virus entry into host cell allows the endosome lysis protein to be exposed as a membrane-lytic peptide. Exhibits pH-independent membrane fragmentation activity and probably mediates viral rapid escape from host endosome via organellar membrane lysis. It is not clear if it then remains partially associated with the capsid and involved in the intracellular microtubule-dependent transport of capsid to the nucleus, or if it is lost during endosomal penetration. Functionally, cofactor that activates the viral protease. Binds to viral protease in a 1:1 ratio. The protein is Pre-protein VI of Canine adenovirus serotype 1 (strain CLL) (CAdV-1).